A 444-amino-acid polypeptide reads, in one-letter code: UDP-N-acetylglucosamine 1-carboxyvinyltransferase (444 aa).

A phosphoenolpyruvate-binding site is contributed by lysine 22 to asparagine 23. Arginine 94 is a UDP-N-acetyl-alpha-D-glucosamine binding site. Catalysis depends on aspartate 119, which acts as the Proton donor. Positions 309 and 331 each coordinate UDP-N-acetyl-alpha-D-glucosamine.

The protein belongs to the EPSP synthase family. MurA subfamily.

It localises to the cytoplasm. The enzyme catalyses phosphoenolpyruvate + UDP-N-acetyl-alpha-D-glucosamine = UDP-N-acetyl-3-O-(1-carboxyvinyl)-alpha-D-glucosamine + phosphate. The protein operates within cell wall biogenesis; peptidoglycan biosynthesis. Cell wall formation. Adds enolpyruvyl to UDP-N-acetylglucosamine. The chain is UDP-N-acetylglucosamine 1-carboxyvinyltransferase from Chlamydia trachomatis serovar A (strain ATCC VR-571B / DSM 19440 / HAR-13).